A 246-amino-acid polypeptide reads, in one-letter code: uncharacterized protein (246 aa).

The protein belongs to the BtpA family.

This is an uncharacterized protein from Archaeoglobus fulgidus (strain ATCC 49558 / DSM 4304 / JCM 9628 / NBRC 100126 / VC-16).